We begin with the raw amino-acid sequence, 383 residues long: Xylose/arabinose import ATP-binding protein XacJ (383 aa).

Residues 4–235 (IQLTDLTKRF…PNNLFVAEFI (232 aa)) enclose the ABC transporter domain. ATP is bound at residue 36–43 (GPSGCGKS).

Belongs to the ABC transporter superfamily. Carbohydrate uptake transporter-1 (CUT1) (TC 3.A.1.1) family. The complex is composed of two ATP-binding proteins (XacJ and XacK), two transmembrane proteins (XacH and XacI) and a solute-binding protein (XacG).

It localises to the cell membrane. It catalyses the reaction D-xylose(out) + ATP + H2O = D-xylose(in) + ADP + phosphate + H(+). It carries out the reaction L-arabinose(out) + ATP + H2O = L-arabinose(in) + ADP + phosphate + H(+). Its function is as follows. Part of the ABC transporter complex XacGHIJK involved in the uptake of xylose and arabinose. Responsible for energy coupling to the transport system. The protein is Xylose/arabinose import ATP-binding protein XacJ of Haloferax volcanii (strain ATCC 29605 / DSM 3757 / JCM 8879 / NBRC 14742 / NCIMB 2012 / VKM B-1768 / DS2) (Halobacterium volcanii).